The sequence spans 318 residues: Putative S-adenosyl-L-methionine-dependent methyltransferase MMAR_1595 (318 aa).

S-adenosyl-L-methionine-binding positions include Glu-132 and 161–162 (DL).

Belongs to the UPF0677 family.

Its function is as follows. Exhibits S-adenosyl-L-methionine-dependent methyltransferase activity. The sequence is that of Putative S-adenosyl-L-methionine-dependent methyltransferase MMAR_1595 from Mycobacterium marinum (strain ATCC BAA-535 / M).